The sequence spans 145 residues: Hemoglobin fetal subunit beta (145 aa).

Positions 1-145 (MLSAEEKAAV…VANALAHRYH (145 aa)) constitute a Globin domain. H62 and H91 together coordinate heme b.

Belongs to the globin family. In terms of assembly, heterotetramer of two alpha chains and two beta chains. As to expression, red blood cells.

Involved in oxygen transport from the lung to the various peripheral tissues. The sequence is that of Hemoglobin fetal subunit beta from Bos taurus (Bovine).